The following is a 289-amino-acid chain: ATP synthase gamma chain (289 aa).

It belongs to the ATPase gamma chain family. In terms of assembly, F-type ATPases have 2 components, CF(1) - the catalytic core - and CF(0) - the membrane proton channel. CF(1) has five subunits: alpha(3), beta(3), gamma(1), delta(1), epsilon(1). CF(0) has three main subunits: a, b and c.

Its subcellular location is the cell inner membrane. Its function is as follows. Produces ATP from ADP in the presence of a proton gradient across the membrane. The gamma chain is believed to be important in regulating ATPase activity and the flow of protons through the CF(0) complex. In Dichelobacter nodosus (strain VCS1703A), this protein is ATP synthase gamma chain.